A 416-amino-acid chain; its full sequence is Glutamyl-tRNA reductase (416 aa).

Substrate-binding positions include 49–52 (TCNR), Ser-105, 110–112 (EPQ), and Gln-116. Cys-50 (nucleophile) is an active-site residue. NADP(+) is bound at residue 185–190 (GAGETI).

This sequence belongs to the glutamyl-tRNA reductase family. Homodimer.

It carries out the reaction (S)-4-amino-5-oxopentanoate + tRNA(Glu) + NADP(+) = L-glutamyl-tRNA(Glu) + NADPH + H(+). It functions in the pathway porphyrin-containing compound metabolism; protoporphyrin-IX biosynthesis; 5-aminolevulinate from L-glutamyl-tRNA(Glu): step 1/2. Functionally, catalyzes the NADPH-dependent reduction of glutamyl-tRNA(Glu) to glutamate 1-semialdehyde (GSA). This Shewanella halifaxensis (strain HAW-EB4) protein is Glutamyl-tRNA reductase.